Consider the following 548-residue polypeptide: Glucan 1,4-alpha-maltotetraohydrolase (548 aa).

Positions 1–21 are cleaved as a signal peptide; sequence MSHILRAAVLAAMLLPLPSMA. Ca(2+) is bound by residues Asp22, Gln23, His34, Asp37, and Glu38. A substrate-binding site is contributed by 99 to 100; that stretch reads YF. Ca(2+) is bound at residue Asn137. His138 serves as a coordination point for substrate. Cys161 and Cys171 are joined by a disulfide. Residues Asp172 and Asp175 each coordinate Ca(2+). Position 177 to 181 (177 to 181) interacts with substrate; sequence FIGGD. Position 183 (Asp183) interacts with Ca(2+). A substrate-binding site is contributed by Arg212. Residue Asp214 is the Nucleophile of the active site. Position 217-218 (217-218) interacts with substrate; the sequence is RG. Residue Gly218 participates in Ca(2+) binding. A disulfide bridge links Cys237 with Cys272. Catalysis depends on Glu240, which acts as the Proton donor. 2 residues coordinate substrate: His314 and Gln326. Residues 446–548 enclose the CBM20 domain; it reads GEPGALVSVS…SEGATTVGRL (103 aa). A compositionally biased stretch (polar residues) spans 529-542; it reads QGGANNSLTPSEGA. Residues 529 to 548 are disordered; sequence QGGANNSLTPSEGATTVGRL.

Belongs to the glycosyl hydrolase 13 family. In terms of assembly, monomer. It depends on Ca(2+) as a cofactor.

Its subcellular location is the secreted. The enzyme catalyses Hydrolysis of (1-&gt;4)-alpha-D-glucosidic linkages in amylaceous polysaccharides, to remove successive maltotetraose residues from the non-reducing chain ends.. Its pathway is glycan degradation; starch degradation. The polypeptide is Glucan 1,4-alpha-maltotetraohydrolase (amyP) (Stutzerimonas stutzeri (Pseudomonas stutzeri)).